We begin with the raw amino-acid sequence, 711 residues long: DNA topoisomerase 1 (711 aa).

The Toprim domain occupies 3–134 (KNLVVIESPN…KCQRITFNEI (132 aa)). Mg(2+) contacts are provided by Glu9 and Asp102. Positions 150–604 (DQSWVQSQFA…FWSNFKEEVK (455 aa)) constitute a Topo IA-type catalytic domain. The interaction with DNA stretch occupies residues 183-188 (SAGRVQ). Tyr340 (O-(5'-phospho-DNA)-tyrosine intermediate) is an active-site residue. 2 C4-type zinc fingers span residues 624-652 (CPSC…FPNC) and 673-702 (CPEC…FPRC).

The protein belongs to the type IA topoisomerase family. In terms of assembly, monomer. Mg(2+) serves as cofactor.

It catalyses the reaction ATP-independent breakage of single-stranded DNA, followed by passage and rejoining.. Releases the supercoiling and torsional tension of DNA, which is introduced during the DNA replication and transcription, by transiently cleaving and rejoining one strand of the DNA duplex. Introduces a single-strand break via transesterification at a target site in duplex DNA. The scissile phosphodiester is attacked by the catalytic tyrosine of the enzyme, resulting in the formation of a DNA-(5'-phosphotyrosyl)-enzyme intermediate and the expulsion of a 3'-OH DNA strand. The free DNA strand then undergoes passage around the unbroken strand, thus removing DNA supercoils. Finally, in the religation step, the DNA 3'-OH attacks the covalent intermediate to expel the active-site tyrosine and restore the DNA phosphodiester backbone. The polypeptide is DNA topoisomerase 1 (Mycoplasma pneumoniae (strain ATCC 29342 / M129 / Subtype 1) (Mycoplasmoides pneumoniae)).